We begin with the raw amino-acid sequence, 315 residues long: WD repeat domain-containing protein 83 (315 aa).

WD repeat units lie at residues 23 to 62 (CSQG…LLRT), 65 to 104 (GHGY…VVRK), 107 to 146 (GHAG…PEPV), 151 to 188 (EARD…VSSD), 190 to 228 (VGSP…LLGE), 231 to 272 (GHKN…LALA), and 275 to 313 (VGSN…AEGG).

Belongs to the WD repeat MORG1 family. As to quaternary structure, interacts with EGLN3/PHD3. Interacts with ERK signaling proteins MAP2K1/MEK1, MAP2K2/MEK2, LAMTOR3, ARAF/Raf-1, MAPK1/ERK2 and MAPK3/ERK1. Identified in the spliceosome C complex. Interacts with PARD6B and CRB3. Interacts strongly with GTP-bound RRAGA but not with inactive GDP-bound. Interacts with p62/SQSTM1. In terms of tissue distribution, ubiquitous.

It is found in the cytoplasm. The protein localises to the lysosome. It localises to the nucleus. In terms of biological role, molecular scaffold protein for various multimeric protein complexes. Acts as a module in the assembly of a multicomponent scaffold for the ERK pathway, linking ERK responses to specific agonists. At low concentrations it enhances ERK activation, whereas high concentrations lead to the inhibition of ERK activation. Also involved in response to hypoxia by acting as a negative regulator of HIF1A/HIF-1-alpha via its interaction with EGLN3/PHD3. May promote degradation of HIF1A. May act by recruiting signaling complexes to a specific upstream activator. May also be involved in pre-mRNA splicing. Participates in tight junction development by regulating apico-basal polarity, a key step in tissue development and organization. Mechanistically, regulates the translocation of PAR6-aPKC from the cytoplasm to the apical surface by acting as an adapter between PARD6B AND CRB3. Also acts as a negative regulator of mTORC1 under nutrient-rich conditions by binding to the active Rag GTPases to inhibit mTORC1 localization to the lysosome and phosphorylation of downstream targets. This facilitates constitutive basal autophagy during nutrient availability. The polypeptide is WD repeat domain-containing protein 83 (Wdr83) (Mus musculus (Mouse)).